The primary structure comprises 452 residues: Coiled-coil domain-containing protein 71 (452 aa).

Residues 81–106 are disordered; it reads PSQTKLQARAPTPAATSPPASAPQTA. A compositionally biased stretch (low complexity) spans 87-106; the sequence is QARAPTPAATSPPASAPQTA. At S129 the chain carries Phosphoserine. Disordered regions lie at residues 209 to 256 and 322 to 404; these read PLKV…GLQS and AREV…LGPG. A coiled-coil region spans residues 279–344; sequence KAAQAKAACA…QAKAKVARTQ (66 aa). Residues 332 to 344 are compositionally biased toward low complexity; that stretch reads KAVQAKAKVARTQ. The span at 377–386 shows a compositional bias: basic and acidic residues; the sequence is RTEEAKDLSP.

This is Coiled-coil domain-containing protein 71 (CCDC71) from Bos taurus (Bovine).